Reading from the N-terminus, the 156-residue chain is Small ribosomal subunit protein uS7 (156 aa).

It belongs to the universal ribosomal protein uS7 family. Part of the 30S ribosomal subunit. Contacts proteins S9 and S11.

Its function is as follows. One of the primary rRNA binding proteins, it binds directly to 16S rRNA where it nucleates assembly of the head domain of the 30S subunit. Is located at the subunit interface close to the decoding center, probably blocks exit of the E-site tRNA. The chain is Small ribosomal subunit protein uS7 from Enterobacter sp. (strain 638).